Reading from the N-terminus, the 273-residue chain is Putative pyruvate, phosphate dikinase regulatory protein (273 aa).

ADP is bound at residue 149-156 (GPSRTSKT).

It belongs to the pyruvate, phosphate/water dikinase regulatory protein family. PDRP subfamily.

The catalysed reaction is N(tele)-phospho-L-histidyl/L-threonyl-[pyruvate, phosphate dikinase] + ADP = N(tele)-phospho-L-histidyl/O-phospho-L-threonyl-[pyruvate, phosphate dikinase] + AMP + H(+). It catalyses the reaction N(tele)-phospho-L-histidyl/O-phospho-L-threonyl-[pyruvate, phosphate dikinase] + phosphate + H(+) = N(tele)-phospho-L-histidyl/L-threonyl-[pyruvate, phosphate dikinase] + diphosphate. In terms of biological role, bifunctional serine/threonine kinase and phosphorylase involved in the regulation of the pyruvate, phosphate dikinase (PPDK) by catalyzing its phosphorylation/dephosphorylation. The chain is Putative pyruvate, phosphate dikinase regulatory protein from Rickettsia conorii (strain ATCC VR-613 / Malish 7).